Reading from the N-terminus, the 317-residue chain is Fe-S cluster assembly protein dre2 (317 aa).

The tract at residues 22-152 is N-terminal SAM-like domain; it reads PVQAKRTLLL…KPNFEPSAAV (131 aa). The segment at 153–209 is linker; it reads PLKFGLKKKNKPTPTAVPSIPTGFAAPMGIDSPVTNHDRDEDDELINEDTLLSEEDL. Positions 219, 230, 233, and 235 each coordinate [2Fe-2S] cluster. Positions 219 to 235 are fe-S binding site A; that stretch reads CQPKTGRRRRACKDCTC. The [4Fe-4S] cluster site is built by Cys-280, Cys-283, Cys-291, and Cys-294. 2 consecutive short sequence motifs (cx2C motif) follow at residues 280–283 and 291–294; these read CGSC and CDGC. The fe-S binding site B stretch occupies residues 280–294; that stretch reads CGSCALGDAFRCDGC.

The protein belongs to the anamorsin family. As to quaternary structure, monomer. Interacts with tah18. Interacts with mia40. [2Fe-2S] cluster serves as cofactor. It depends on [4Fe-4S] cluster as a cofactor.

The protein localises to the cytoplasm. The protein resides in the mitochondrion intermembrane space. In terms of biological role, component of the cytosolic iron-sulfur (Fe-S) protein assembly (CIA) machinery required for the maturation of extramitochondrial Fe-S proteins. Part of an electron transfer chain functioning in an early step of cytosolic Fe-S biogenesis, facilitating the de novo assembly of a [4Fe-4S] cluster on the scaffold complex cfd1-nbp35. Electrons are transferred to dre2 from NADPH via the FAD- and FMN-containing protein tah18. Tah18-dre2 are also required for the assembly of the diferric tyrosyl radical cofactor of ribonucleotide reductase (RNR), probably by providing electrons for reduction during radical cofactor maturation in the catalytic small subunit rnr2. This is Fe-S cluster assembly protein dre2 from Penicillium rubens (strain ATCC 28089 / DSM 1075 / NRRL 1951 / Wisconsin 54-1255) (Penicillium chrysogenum).